Reading from the N-terminus, the 129-residue chain is Large ribosomal subunit protein bL12 (129 aa).

Belongs to the bacterial ribosomal protein bL12 family. As to quaternary structure, homodimer. Part of the ribosomal stalk of the 50S ribosomal subunit. Forms a multimeric L10(L12)X complex, where L10 forms an elongated spine to which 2 to 4 L12 dimers bind in a sequential fashion. Binds GTP-bound translation factors.

Forms part of the ribosomal stalk which helps the ribosome interact with GTP-bound translation factors. Is thus essential for accurate translation. This is Large ribosomal subunit protein bL12 from Synechococcus sp. (strain CC9605).